Consider the following 486-residue polypeptide: UDP-N-acetylmuramate--L-alanine ligase (486 aa).

ATP is bound at residue 129 to 135 (GTHGKTT).

It belongs to the MurCDEF family.

The protein resides in the cytoplasm. It catalyses the reaction UDP-N-acetyl-alpha-D-muramate + L-alanine + ATP = UDP-N-acetyl-alpha-D-muramoyl-L-alanine + ADP + phosphate + H(+). It participates in cell wall biogenesis; peptidoglycan biosynthesis. Its function is as follows. Cell wall formation. This is UDP-N-acetylmuramate--L-alanine ligase from Vibrio vulnificus (strain YJ016).